A 447-amino-acid chain; its full sequence is Elongation factor 1-alpha (447 aa).

The tr-type G domain maps to 5-230 (KFHINIVVIG…DQINDAKRPS (226 aa)). The tract at residues 14–21 (GHVDSGKS) is G1. GTP is bound at residue 14 to 21 (GHVDSGKS). Lysine 55 is subject to N6,N6-dimethyllysine. The G2 stretch occupies residues 70–74 (GITID). N6,N6,N6-trimethyllysine is present on lysine 79. The tract at residues 91–94 (DAPG) is G3. GTP-binding positions include 91-95 (DAPGH) and 153-156 (NKMD). A G4 region spans residues 153 to 156 (NKMD). Lysine 187 carries the post-translational modification N6,N6,N6-trimethyllysine. The tract at residues 194–196 (SGF) is G5. N6-methyllysine is present on lysine 261. Glutamate 289 bears the 5-glutamyl glycerylphosphorylethanolamine mark. Lysine 306 bears the N6,N6,N6-trimethyllysine mark. 5-glutamyl glycerylphosphorylethanolamine is present on glutamate 362. Residue lysine 396 is modified to N6,N6,N6-trimethyllysine.

This sequence belongs to the TRAFAC class translation factor GTPase superfamily. Classic translation factor GTPase family. EF-Tu/EF-1A subfamily. In terms of tissue distribution, was detected in all tissues examined but was most abundant in roots and salt-adapted cultured cells.

The protein resides in the cytoplasm. In terms of biological role, this protein promotes the GTP-dependent binding of aminoacyl-tRNA to the A-site of ribosomes during protein biosynthesis. This Nicotiana tabacum (Common tobacco) protein is Elongation factor 1-alpha.